The chain runs to 115 residues: Large ribosomal subunit protein bL19 (115 aa).

Belongs to the bacterial ribosomal protein bL19 family.

This protein is located at the 30S-50S ribosomal subunit interface and may play a role in the structure and function of the aminoacyl-tRNA binding site. In Buchnera aphidicola subsp. Cinara cedri (strain Cc), this protein is Large ribosomal subunit protein bL19.